The chain runs to 284 residues: Diaminopimelate epimerase (284 aa).

The substrate site is built by N20, Q53, and N73. C82 (proton donor) is an active-site residue. Substrate contacts are provided by residues 83–84 (GN), N167, N200, and 218–219 (ER). The active-site Proton acceptor is the C227. 228–229 (GS) is a substrate binding site.

Belongs to the diaminopimelate epimerase family. In terms of assembly, homodimer.

Its subcellular location is the cytoplasm. The enzyme catalyses (2S,6S)-2,6-diaminopimelate = meso-2,6-diaminopimelate. It participates in amino-acid biosynthesis; L-lysine biosynthesis via DAP pathway; DL-2,6-diaminopimelate from LL-2,6-diaminopimelate: step 1/1. Its function is as follows. Catalyzes the stereoinversion of LL-2,6-diaminopimelate (L,L-DAP) to meso-diaminopimelate (meso-DAP), a precursor of L-lysine and an essential component of the bacterial peptidoglycan. The polypeptide is Diaminopimelate epimerase (Xanthomonas axonopodis pv. citri (strain 306)).